The following is a 285-amino-acid chain: Ribosomal RNA small subunit methyltransferase H (285 aa).

Residues 34–36 (AGH), D51, F75, D96, and H103 each bind S-adenosyl-L-methionine. The segment at 259 to 285 (LVPSEKEAAQNPRARSAKLRAAEKEAP) is disordered.

This sequence belongs to the methyltransferase superfamily. RsmH family.

It localises to the cytoplasm. The enzyme catalyses cytidine(1402) in 16S rRNA + S-adenosyl-L-methionine = N(4)-methylcytidine(1402) in 16S rRNA + S-adenosyl-L-homocysteine + H(+). Functionally, specifically methylates the N4 position of cytidine in position 1402 (C1402) of 16S rRNA. This is Ribosomal RNA small subunit methyltransferase H from Thermus thermophilus (strain ATCC 27634 / DSM 579 / HB8).